Here is a 442-residue protein sequence, read N- to C-terminus: Vitellogenin-2 (442 aa).

The signal sequence occupies residues 1-19 (MNPLRTLCVMACLLAVAMG). Over residues 21 to 33 (PQSGNRSGRRSNS) the composition is skewed to low complexity. The interval 21 to 44 (PQSGNRSGRRSNSLDNVEQPSNWV) is disordered. Ser-31 and Ser-33 each carry phosphoserine. The segment covering 34–44 (LDNVEQPSNWV) has biased composition (polar residues). Phosphoserine is present on Ser-82. Disordered regions lie at residues 165-200 (QPYE…QDDT) and 408-442 (KSPF…SRRQ). Residue Thr-170 is modified to Phosphothreonine. The residue at position 172 (Tyr-172) is a Sulfotyrosine. Ser-173, Ser-178, Ser-181, Ser-182, and Ser-183 each carry phosphoserine. 2 stretches are compositionally biased toward low complexity: residues 175–186 (EEQSQRSSSEEQ) and 431–442 (RQSSSNQGSRRQ).

It belongs to the AB hydrolase superfamily. Lipase family. Tyrosine sulfation occurs in the female only and plays an essential functional role. As to expression, synthesized in the fat body and ovarian follicle cells and accumulate in the oocyte.

It is found in the secreted. Vitellogenin is the major yolk protein of eggs where it is used as a food source during embryogenesis. Vitellogenins and their receptor yl/yolkless are required for maintenance of microtubule plus-end orientation towards the posterior pole of oocytes. Involved in polarized localization of germ plasm components, such as osk mRNA and vas protein, to the oocyte posterior cortex. Receptor-mediated endocytosis by yl/yolkless is crucial for actin reorganization, mediated by osk isoform A/Long, required to anchor germ plasm components to the oocyte cortex. The sequence is that of Vitellogenin-2 (Yp2) from Drosophila melanogaster (Fruit fly).